Reading from the N-terminus, the 182-residue chain is Adenine phosphoribosyltransferase (182 aa).

This sequence belongs to the purine/pyrimidine phosphoribosyltransferase family. In terms of assembly, homodimer.

The protein resides in the cytoplasm. It catalyses the reaction AMP + diphosphate = 5-phospho-alpha-D-ribose 1-diphosphate + adenine. Its pathway is purine metabolism; AMP biosynthesis via salvage pathway; AMP from adenine: step 1/1. Functionally, catalyzes a salvage reaction resulting in the formation of AMP, that is energically less costly than de novo synthesis. This is Adenine phosphoribosyltransferase from Renibacterium salmoninarum (strain ATCC 33209 / DSM 20767 / JCM 11484 / NBRC 15589 / NCIMB 2235).